The chain runs to 369 residues: ERCC4 domain-containing protein EP364R (369 aa).

In terms of domain architecture, ERCC4 spans 3 to 101 (FLVADHREHH…QLYFFVEGPA (99 aa)). The disordered stretch occupies residues 339 to 369 (PLHDVSDDASSDASSPTGHQTLSKEMSLNTA). Residues 354 to 369 (PTGHQTLSKEMSLNTA) are compositionally biased toward polar residues.

The protein belongs to the asfivirus EP364R family.

In terms of biological role, plays a role in the inhibition of type I interferon signaling pathway. Mechanistically, specifically interacts with 2',3'-cGAMP and cleaves it via its phosphodiesterase activity. In turn, prevents 2',3'-cGAMP interaction with host ER-resident STING1 leading to inhibition of downstream signaling pathway and type I interferon production. The chain is ERCC4 domain-containing protein EP364R from African swine fever virus (isolate Tick/South Africa/Pretoriuskop Pr4/1996) (ASFV).